The following is a 747-amino-acid chain: WD repeat-containing protein 91 (747 aa).

The stretch at 183 to 227 (QRTNQVQEENEVLRQKLFALQAEVHRLKKEEQQQEEAAALVQHKL) forms a coiled coil. Position 256 is a phosphoserine (S256). Over residues 265 to 278 (LLPQSKKSPSRLSP) the composition is skewed to low complexity. The interval 265 to 358 (LLPQSKKSPS…SQTQCAEKKL (94 aa)) is disordered. Residues 283-299 (PQAQSSAKKDTFSSQAT) are compositionally biased toward polar residues. Position 288 is a phosphoserine (S288). The span at 332–343 (RLQDHGKERREL) shows a compositional bias: basic and acidic residues. Residues 344-353 (LSTSSSQTQC) show a composition bias toward polar residues. WD repeat units follow at residues 406–445 (EHHS…QTKA), 448–488 (ISKS…NLCE), 511–555 (VCSA…QQLQ), 560–599 (PEPI…CAMS), 602–641 (AHCG…LKVS), 664–702 (VQVP…KVLE), and 709–747 (GHRA…AHKL).

It belongs to the WD repeat WDR91 family. Interacts with WDR81; involved in early to late endosome cargo transport. Interacts with BECN1; negatively regulates the PI3 kinase/PI3K activity associated with endosomal membranes.

Its subcellular location is the early endosome membrane. It is found in the late endosome membrane. In terms of biological role, functions as a negative regulator of the PI3 kinase/PI3K activity associated with endosomal membranes via BECN1, a core subunit of the PI3K complex. By modifying the phosphatidylinositol 3-phosphate/PtdInsP3 content of endosomal membranes may regulate endosome fusion, recycling, sorting and early to late endosome transport. It is for instance, required for the delivery of cargos like BST2/tetherin from early to late endosome and thereby participates indirectly to their degradation by the lysosome. May play a role in meiosis. The chain is WD repeat-containing protein 91 from Rattus norvegicus (Rat).